The following is a 566-amino-acid chain: Glutamate--tRNA ligase (566 aa).

The 'HIGH' region motif lies at 104-114 (PNPDGPLHLGN).

This sequence belongs to the class-I aminoacyl-tRNA synthetase family. Glutamate--tRNA ligase type 2 subfamily.

The protein localises to the cytoplasm. The catalysed reaction is tRNA(Glu) + L-glutamate + ATP = L-glutamyl-tRNA(Glu) + AMP + diphosphate. In terms of biological role, catalyzes the attachment of glutamate to tRNA(Glu) in a two-step reaction: glutamate is first activated by ATP to form Glu-AMP and then transferred to the acceptor end of tRNA(Glu). The protein is Glutamate--tRNA ligase of Metallosphaera sedula (strain ATCC 51363 / DSM 5348 / JCM 9185 / NBRC 15509 / TH2).